Reading from the N-terminus, the 501-residue chain is Cytochrome P450 90A4 (501 aa).

Residues 2 to 22 form a helical membrane-spanning segment; it reads AAAALLLLAAAAAAVVVAMAL. Cys-446 lines the heme pocket.

Belongs to the cytochrome P450 family. Heme is required as a cofactor.

It is found in the membrane. It participates in plant hormone biosynthesis; brassinosteroid biosynthesis. In terms of biological role, catalyzes the C23-alpha-hydroxylation step in brassinosteroid biosynthesis. Converts 6-deoxocathasterone to 6-deoxoteasterone in the late C6-oxidation pathway and cathasterone to teasterone (TE) in the early C6-oxidation pathway of brassinolide (BL) biosynthesis. The polypeptide is Cytochrome P450 90A4 (Oryza sativa subsp. indica (Rice)).